The primary structure comprises 186 residues: ADP-ribosylation factor-like protein 8B (186 aa).

An intramembrane region (note=Mediates targeting to membranes) is located at residues 1–19 (MLALISRLLDWFRSLFWKE). GTP contacts are provided by residues 29–35 (QYSGKTT), 71–75 (DIGGQ), and 130–133 (NKRD). Lysine 141 participates in a covalent cross-link: Glycyl lysine isopeptide (Lys-Gly) (interchain with G-Cter in ubiquitin).

This sequence belongs to the small GTPase superfamily. Arf family. As to quaternary structure, interacts with tubulin. Interacts with BORCS5; recruits ARL8B to lysosomes. Interacts with VPS41; the interaction mediates the recruitment of the HOPS complex to lysosomes. Interacts (GTP-bound form) with PLEKHM2 (via RUN domain); the interaction is required to recruit the motor protein kinesin-1 on lysosomes. Interacts (GTP-bound form) with PLEKHM1 (via RUN domain); the interaction is required for PLEKHM1 localization to lysosomes and for ARL8B function in delivery and degradation of endocytic and autophagic cargo in lysosomes. PLEKHM1 and PLEKHM2 compete for interaction with ARL8B. Interacts (GTP-bound form) with RUFY1; the interaction is required for RUFY1 endosomal location. When GTP-bound, interacts with RUFY3 and RUFY4, but not with RUFY1, nor RUFY2. Ubiquitinated at Lys-141 by RNF167, leading to its degradation.

It is found in the late endosome membrane. It localises to the lysosome membrane. The protein localises to the cytoplasm. The protein resides in the cytoskeleton. Its subcellular location is the spindle. It is found in the cell projection. It localises to the axon. The protein localises to the synapse. The protein resides in the cytolytic granule membrane. Its subcellular location is the early endosome membrane. The catalysed reaction is GTP + H2O = GDP + phosphate + H(+). Its function is as follows. Small GTPase which cycles between active GTP-bound and inactive GDP-bound states. In its active state, binds to a variety of effector proteins playing a key role in the regulation of lysosomal positioning which is important for nutrient sensing, natural killer cell-mediated cytotoxicity and antigen presentation. Along with its effectors, orchestrates lysosomal transport and fusion. Localizes specifically to lysosomal membranes and mediates anterograde lysosomal motility by recruiting PLEKHM2, which in turn recruits the motor protein kinesin-1 on lysosomes. Required for lysosomal and cytolytic granule exocytosis. Critical factor involved in NK cell-mediated cytotoxicity. Drives the polarization of cytolytic granules and microtubule-organizing centers (MTOCs) toward the immune synapse between effector NK lymphocytes and target cells. In neurons, mediates the anterograde axonal long-range transport of presynaptic lysosome-related vesicles required for presynaptic biogenesis and synaptic function. Also acts as a regulator of endosome to lysosome trafficking pathways of special significance for host defense. Recruits RUFY1 onto early endosomes regulating endosomes to trans-Golgi network proteins retrieval. Regulates cargo trafficking to lysosomes by binding to PLEKHM1 and recruiting the HOPS subunit VPS41, resulting in functional assembly of the HOPS complex on lysosomal membranes. Plays an important role in cargo delivery to lysosomes for antigen presentation and microbial killing. Directs the intersection of CD1d with lipid antigens in lysosomes, and plays a role in intersecting phagosomes with lysosomes to generate phagolysosomes that kill microbes. Involved in the process of MHC II presentation. Regulates the delivery of antigens to lysosomes and the formation of MHC II-peptide complexes through the recruitment of the HOPS complex to lysosomes allowing the fusion of late endosomes to lysosomes. May play a role in chromosome segregation. This Bos taurus (Bovine) protein is ADP-ribosylation factor-like protein 8B (ARL8B).